A 1175-amino-acid polypeptide reads, in one-letter code: uncharacterized protein (1175 aa).

586–593 lines the ATP pocket; that stretch reads GPAGTGKT.

This is an uncharacterized protein from Methanocaldococcus jannaschii (strain ATCC 43067 / DSM 2661 / JAL-1 / JCM 10045 / NBRC 100440) (Methanococcus jannaschii).